We begin with the raw amino-acid sequence, 572 residues long: Proline--tRNA ligase (572 aa).

It belongs to the class-II aminoacyl-tRNA synthetase family. ProS type 1 subfamily. As to quaternary structure, homodimer.

Its subcellular location is the cytoplasm. The catalysed reaction is tRNA(Pro) + L-proline + ATP = L-prolyl-tRNA(Pro) + AMP + diphosphate. Catalyzes the attachment of proline to tRNA(Pro) in a two-step reaction: proline is first activated by ATP to form Pro-AMP and then transferred to the acceptor end of tRNA(Pro). As ProRS can inadvertently accommodate and process non-cognate amino acids such as alanine and cysteine, to avoid such errors it has two additional distinct editing activities against alanine. One activity is designated as 'pretransfer' editing and involves the tRNA(Pro)-independent hydrolysis of activated Ala-AMP. The other activity is designated 'posttransfer' editing and involves deacylation of mischarged Ala-tRNA(Pro). The misacylated Cys-tRNA(Pro) is not edited by ProRS. In Hydrogenovibrio crunogenus (strain DSM 25203 / XCL-2) (Thiomicrospira crunogena), this protein is Proline--tRNA ligase.